The following is a 199-amino-acid chain: Pyridoxal 5'-phosphate synthase subunit PdxT (199 aa).

Residue glycine 52 to serine 54 participates in L-glutamine binding. Cysteine 84 functions as the Nucleophile in the catalytic mechanism. Residues arginine 115 and isoleucine 143–arginine 144 contribute to the L-glutamine site. Active-site charge relay system residues include histidine 179 and glutamate 181.

Belongs to the glutaminase PdxT/SNO family. In terms of assembly, in the presence of PdxS, forms a dodecamer of heterodimers. Only shows activity in the heterodimer.

The catalysed reaction is aldehydo-D-ribose 5-phosphate + D-glyceraldehyde 3-phosphate + L-glutamine = pyridoxal 5'-phosphate + L-glutamate + phosphate + 3 H2O + H(+). It carries out the reaction L-glutamine + H2O = L-glutamate + NH4(+). The protein operates within cofactor biosynthesis; pyridoxal 5'-phosphate biosynthesis. Functionally, catalyzes the hydrolysis of glutamine to glutamate and ammonia as part of the biosynthesis of pyridoxal 5'-phosphate. The resulting ammonia molecule is channeled to the active site of PdxS. The protein is Pyridoxal 5'-phosphate synthase subunit PdxT of Methanosarcina acetivorans (strain ATCC 35395 / DSM 2834 / JCM 12185 / C2A).